Here is a 295-residue protein sequence, read N- to C-terminus: MELSQLLNEIRANYEKILTRNQIETVLSTRIQLEEDISKKMDKDEEALKAAQAELKEARRQWHHLQVEIESLHAVERGLENSLHASEQHYQMQLQDLETVIEGLEKELQEVRRGIEKQLQEHEMLLNTKMRLEQEIATYRHLLEKEEIRYYGCIQGGKKDKKPTTSRVGFVLPSAIINEISFTTKVPQKYENENVETVTKQAILNGSIVKESTEAHGTIQTEKVDEVIKEWEGSFFKDNPRLRKKSVSLRFDLHLAATDEGCLETKQDNLPDIEVRLIMRRSCSIPSIKPPSTAN.

The region spanning 1-150 (MELSQLLNEI…HLLEKEEIRY (150 aa)) is the IF rod domain. A coiled-coil region spans residues 2 to 150 (ELSQLLNEIR…HLLEKEEIRY (149 aa)).

This sequence belongs to the intermediate filament family.

The sequence is that of Keratin-like protein KRT222 (KRT222) from Homo sapiens (Human).